We begin with the raw amino-acid sequence, 141 residues long: Large ribosomal subunit protein uL16c (141 aa).

This sequence belongs to the universal ribosomal protein uL16 family. In terms of assembly, part of the 50S ribosomal subunit.

The protein resides in the plastid. The protein localises to the chloroplast. The sequence is that of Large ribosomal subunit protein uL16c from Zygnema circumcarinatum (Green alga).